The primary structure comprises 306 residues: UDP-3-O-acyl-N-acetylglucosamine deacetylase (306 aa).

Zn(2+)-binding residues include His79, His238, and Asp242. His265 serves as the catalytic Proton donor.

Belongs to the LpxC family. Requires Zn(2+) as cofactor.

The catalysed reaction is a UDP-3-O-[(3R)-3-hydroxyacyl]-N-acetyl-alpha-D-glucosamine + H2O = a UDP-3-O-[(3R)-3-hydroxyacyl]-alpha-D-glucosamine + acetate. Its pathway is glycolipid biosynthesis; lipid IV(A) biosynthesis; lipid IV(A) from (3R)-3-hydroxytetradecanoyl-[acyl-carrier-protein] and UDP-N-acetyl-alpha-D-glucosamine: step 2/6. Catalyzes the hydrolysis of UDP-3-O-myristoyl-N-acetylglucosamine to form UDP-3-O-myristoylglucosamine and acetate, the committed step in lipid A biosynthesis. The chain is UDP-3-O-acyl-N-acetylglucosamine deacetylase from Shewanella halifaxensis (strain HAW-EB4).